Reading from the N-terminus, the 106-residue chain is Large ribosomal subunit protein uL24 (106 aa).

The protein belongs to the universal ribosomal protein uL24 family. As to quaternary structure, part of the 50S ribosomal subunit.

Its function is as follows. One of two assembly initiator proteins, it binds directly to the 5'-end of the 23S rRNA, where it nucleates assembly of the 50S subunit. In terms of biological role, one of the proteins that surrounds the polypeptide exit tunnel on the outside of the subunit. This Thermosipho melanesiensis (strain DSM 12029 / CIP 104789 / BI429) protein is Large ribosomal subunit protein uL24.